The primary structure comprises 151 residues: Actin-depolymerizing factor 10 (151 aa).

One can recognise an ADF-H domain in the interval 15–149; sequence PAWIEVPEKS…DLEVLRGRAN (135 aa).

This sequence belongs to the actin-binding proteins ADF family.

Its function is as follows. Actin-depolymerizing protein. Severs actin filaments (F-actin) and binds to actin monomers. The polypeptide is Actin-depolymerizing factor 10 (ADF10) (Oryza sativa subsp. japonica (Rice)).